Here is a 291-residue protein sequence, read N- to C-terminus: MTAITASMVKELRDRTGLAMMECKKALTEANGDIELAIDNLRKSGQAKAAKKAGNIAADGAITIVQDGNKAILVEVNCQTDFVAKDENFSNFAHTVAAAALAAGETDAAKIAELKLADGQSVEEARIALVQKIGENIQVRRAKIVEGEQLAIYKHGLKIGVVVSYTGDADTGKGIAMHVAAFNPVAVNAEAVPADLIAKEKEIAEAKALESGKPANIVEKMVTGSVEKYLNEVALDRQMYVIDNEKKVADVLKATGTNVANFVRFEVGEGIEKKAELSFAEEVAAAQAAAK.

Positions 80 to 83 are involved in Mg(2+) ion dislocation from EF-Tu; that stretch reads TDFV.

The protein belongs to the EF-Ts family.

The protein localises to the cytoplasm. Functionally, associates with the EF-Tu.GDP complex and induces the exchange of GDP to GTP. It remains bound to the aminoacyl-tRNA.EF-Tu.GTP complex up to the GTP hydrolysis stage on the ribosome. The chain is Elongation factor Ts from Acinetobacter baumannii (strain AB307-0294).